The following is a 195-amino-acid chain: ATP synthase subunit b (195 aa).

The chain crosses the membrane as a helical span at residues 28-48; sequence IFPNVYVLIAHVISLIFLLLL.

This sequence belongs to the ATPase B chain family. F-type ATPases have 2 components, F(1) - the catalytic core - and F(0) - the membrane proton channel. F(1) has five subunits: alpha(3), beta(3), gamma(1), delta(1), epsilon(1). F(0) has three main subunits: a(1), b(2) and c(10-14). The alpha and beta chains form an alternating ring which encloses part of the gamma chain. F(1) is attached to F(0) by a central stalk formed by the gamma and epsilon chains, while a peripheral stalk is formed by the delta and b chains.

It localises to the cell membrane. In terms of biological role, f(1)F(0) ATP synthase produces ATP from ADP in the presence of a proton or sodium gradient. F-type ATPases consist of two structural domains, F(1) containing the extramembraneous catalytic core and F(0) containing the membrane proton channel, linked together by a central stalk and a peripheral stalk. During catalysis, ATP synthesis in the catalytic domain of F(1) is coupled via a rotary mechanism of the central stalk subunits to proton translocation. Its function is as follows. Component of the F(0) channel, it forms part of the peripheral stalk, linking F(1) to F(0). This is ATP synthase subunit b from Malacoplasma penetrans (strain HF-2) (Mycoplasma penetrans).